Reading from the N-terminus, the 435-residue chain is Serine--tRNA ligase (435 aa).

242–244 (TAE) provides a ligand contact to L-serine. ATP is bound at residue 273–275 (RSE). Residue glutamate 296 participates in L-serine binding. 360-363 (EISS) is a binding site for ATP. Serine 396 contacts L-serine.

Belongs to the class-II aminoacyl-tRNA synthetase family. Type-1 seryl-tRNA synthetase subfamily. As to quaternary structure, homodimer. The tRNA molecule binds across the dimer.

It localises to the cytoplasm. The enzyme catalyses tRNA(Ser) + L-serine + ATP = L-seryl-tRNA(Ser) + AMP + diphosphate + H(+). It catalyses the reaction tRNA(Sec) + L-serine + ATP = L-seryl-tRNA(Sec) + AMP + diphosphate + H(+). Its pathway is aminoacyl-tRNA biosynthesis; selenocysteinyl-tRNA(Sec) biosynthesis; L-seryl-tRNA(Sec) from L-serine and tRNA(Sec): step 1/1. Functionally, catalyzes the attachment of serine to tRNA(Ser). Is also able to aminoacylate tRNA(Sec) with serine, to form the misacylated tRNA L-seryl-tRNA(Sec), which will be further converted into selenocysteinyl-tRNA(Sec). The protein is Serine--tRNA ligase of Vibrio vulnificus (strain YJ016).